The sequence spans 134 residues: ATP synthase epsilon chain (134 aa).

This sequence belongs to the ATPase epsilon chain family. In terms of assembly, F-type ATPases have 2 components, CF(1) - the catalytic core - and CF(0) - the membrane proton channel. CF(1) has five subunits: alpha(3), beta(3), gamma(1), delta(1), epsilon(1). CF(0) has three main subunits: a, b and c.

The protein localises to the cell membrane. In terms of biological role, produces ATP from ADP in the presence of a proton gradient across the membrane. In Priestia megaterium (strain ATCC 12872 / QMB1551) (Bacillus megaterium), this protein is ATP synthase epsilon chain (atpC).